We begin with the raw amino-acid sequence, 81 residues long: Large ribosomal subunit protein bL31B (81 aa).

It belongs to the bacterial ribosomal protein bL31 family. Type B subfamily. Part of the 50S ribosomal subunit.

This is Large ribosomal subunit protein bL31B from Listeria innocua serovar 6a (strain ATCC BAA-680 / CLIP 11262).